A 370-amino-acid chain; its full sequence is Dihydroorotate dehydrogenase (quinone) (370 aa).

Residues 80–84 (AGFDK) and Thr104 each bind FMN. Lys84 serves as a coordination point for substrate. 129–133 (NRMGF) lines the substrate pocket. FMN is bound by residues Asn157 and Asn190. Position 190 (Asn190) interacts with substrate. Catalysis depends on Ser193, which acts as the Nucleophile. A substrate-binding site is contributed by Asn195. FMN contacts are provided by Lys226 and Thr254. Position 255–256 (255–256 (NT)) interacts with substrate. Residues Gly278, Gly307, and 328-329 (YT) each bind FMN.

It belongs to the dihydroorotate dehydrogenase family. Type 2 subfamily. Monomer. FMN is required as a cofactor.

The protein localises to the cell membrane. The enzyme catalyses (S)-dihydroorotate + a quinone = orotate + a quinol. The protein operates within pyrimidine metabolism; UMP biosynthesis via de novo pathway; orotate from (S)-dihydroorotate (quinone route): step 1/1. In terms of biological role, catalyzes the conversion of dihydroorotate to orotate with quinone as electron acceptor. This chain is Dihydroorotate dehydrogenase (quinone), found in Mycolicibacterium paratuberculosis (strain ATCC BAA-968 / K-10) (Mycobacterium paratuberculosis).